Reading from the N-terminus, the 670-residue chain is Transcription factor vib-1 (670 aa).

The NDT80 DNA-binding region spans 106–341 (TEMVQDLRDD…RSPRNFQARK (236 aa)). 2 stretches are compositionally biased toward polar residues: residues 394–438 (FTSA…TTSM) and 553–568 (LGNS…QHHP). 2 disordered regions span residues 394–457 (FTSA…SYTA) and 496–670 (SAPP…WNAT). Residues 592–605 (ASAPASAPTSAAPP) show a composition bias toward low complexity. Residues 611-631 (PSQSWTSTAGEGQTSSYTNGG) are compositionally biased toward polar residues.

The protein resides in the nucleus. It localises to the cytoplasm. Its function is as follows. Transcription factor that acts as a positive regulator of nonrepressible acid phosphatase activity. Is a major regulator of responses to nitrogen and carbon starvation and is essential for the expression of genes involved in vegetative incompatibility (like pin-c, het-6, and tol). Vegetative incompatibility is a non-self-recognition system ubiquitous in filamentous fungi which results in programmed cell death. The polypeptide is Transcription factor vib-1 (vib-1) (Neurospora crassa (strain ATCC 24698 / 74-OR23-1A / CBS 708.71 / DSM 1257 / FGSC 987)).